Here is a 1115-residue protein sequence, read N- to C-terminus: Receptor-type tyrosine-protein phosphatase H (1115 aa).

An N-terminal signal peptide occupies residues 1 to 27 (MAGAGGGLGVWGNLVLLGLCSWTGARA). The Extracellular segment spans residues 28-754 (PAPNPGRNLT…VVCHTESAGV (727 aa)). Fibronectin type-III domains are found at residues 32-121 (PGRN…APNP), 122-209 (VRNL…TAHN), 210-299 (PVRN…APNP), 300-387 (VRNL…TAPN), 388-477 (PVRN…VPNA), 478-563 (VTSL…TAAT), 564-666 (APNE…TYPD), and 665-749 (PDTV…VCHT). N-linked (GlcNAc...) asparagine glycosylation is found at Asn-35, Asn-83, Asn-172, Asn-256, Asn-285, Asn-350, Asn-434, Asn-468, Asn-556, and Asn-642. Residues 755–775 (IAGAFVGILLFLILVGLLIFF) traverse the membrane as a helical segment. At 776–1115 (LKRRNKKKQQ…AAIQAHKLEV (340 aa)) the chain is on the cytoplasmic side. The 260-residue stretch at 820–1079 (FADEYQQLSL…VFLHQCILRF (260 aa)) folds into the Tyrosine-protein phosphatase domain. Cys-1020 acts as the Phosphocysteine intermediate in catalysis. Phosphotyrosine occurs at positions 1094 and 1102.

It belongs to the protein-tyrosine phosphatase family. Receptor class 3 subfamily. As to quaternary structure, homodimer; disulfide-linked. Interacts with LCK. Interacts (phosphorylated form) with GRB2 (via SH2 domain). Interacts (phosphorylated form) with FYN (via SH2 domain). Interacts (via extracellular domain) with CEACAM20 (via extracellular domain); the interaction dephosphorylates CEACAM20. As to expression, expressed at high levels in the brain, spleen and liver and at lower levels in the heart and stomach. Expressed in pancreatic and colorectal cancer cells, but not in normal pancreas or colon. Expression in hepatocellular carcinoma is related to the differentiation status of the tumor and expression is inversely related to tumor aggressiveness.

It localises to the cell projection. Its subcellular location is the microvillus membrane. The protein resides in the apical cell membrane. The protein localises to the cytoplasm. The catalysed reaction is O-phospho-L-tyrosyl-[protein] + H2O = L-tyrosyl-[protein] + phosphate. Regulated by reversible dimerization. Dimerization reduces its catalytic activity. Functionally, protein phosphatase that may contribute to contact inhibition of cell growth and motility by mediating the dephosphorylation of focal adhesion-associated substrates and thus negatively regulating integrin-promoted signaling processes. Induces apoptotic cell death by at least two distinct mechanisms: inhibition of cell survival signaling mediated by PI 3-kinase, Akt, and ILK and activation of a caspase-dependent proapoptotic pathway. Inhibits the basal activity of LCK and its activation in response to TCR stimulation and TCR-induced activation of MAP kinase and surface expression of CD69. Inhibits TCR-induced tyrosine phosphorylation of LAT and ZAP70. Inhibits both basal activity of DOK1 and its CD2-induced tyrosine phosphorylation. Induces dephosphorylation of BCAR1, focal adhesion kinase and SRC. Reduces migratory activity of activity of Jurkat cells. Reduces tyrosine phosphorylation of CEACAM20 and thereby contributes to suppress the intestinal immune response CEACAM20. The protein is Receptor-type tyrosine-protein phosphatase H (PTPRH) of Homo sapiens (Human).